The chain runs to 766 residues: Probable serine/threonine-protein kinase KKQ8 (766 aa).

5 disordered regions span residues 1 to 165 (MPEH…DTSS), 201 to 240 (GHYA…AAQL), 277 to 297 (SDAN…LDLP), 362 to 384 (TRSH…DDPS), and 417 to 437 (AAKN…AGVQ). Residues 14–25 (RSLSLGSSMRSL) are compositionally biased toward low complexity. Residues 49–64 (VDIRVDTASASREHTP) are compositionally biased toward basic and acidic residues. Polar residues predominate over residues 94-120 (LTPTNSNPQSKSGSPVSQNTSQESLIT). Over residues 127–137 (EDYRPSKDSRR) the composition is skewed to basic and acidic residues. 2 stretches are compositionally biased toward polar residues: residues 140-165 (RNAS…DTSS) and 214-223 (PTSSRVPSRS). Residues 288–297 (SKNDGHLDLP) are compositionally biased toward basic and acidic residues. Residues 372–382 (DSSDDDEELDD) show a composition bias toward acidic residues. The span at 419–430 (KNKHNQSSKHRT) shows a compositional bias: basic residues. Residues 449-752 (GKCVAVVGHG…IDKLLQTGWM (304 aa)) enclose the Protein kinase domain. Residues 455 to 463 (VGHGAYGVV) and lysine 493 contribute to the ATP site. The active-site Proton acceptor is the aspartate 603.

It belongs to the protein kinase superfamily. CAMK Ser/Thr protein kinase family. NPR/HAL subfamily. HAL5 sub-subfamily.

It is found in the cytoplasm. It catalyses the reaction L-seryl-[protein] + ATP = O-phospho-L-seryl-[protein] + ADP + H(+). The enzyme catalyses L-threonyl-[protein] + ATP = O-phospho-L-threonyl-[protein] + ADP + H(+). The protein is Probable serine/threonine-protein kinase KKQ8 (KKQ8) of Candida glabrata (strain ATCC 2001 / BCRC 20586 / JCM 3761 / NBRC 0622 / NRRL Y-65 / CBS 138) (Yeast).